The following is a 528-amino-acid chain: 2-isopropylmalate synthase (528 aa).

The 268-residue stretch at 12–279 (IRIFDTTLRD…DSSINTPRIV (268 aa)) folds into the Pyruvate carboxyltransferase domain. Mn(2+) is bound by residues D21, H214, H216, and N250. The segment at 401–528 (RLASMTISDV…STDVPTPATA (128 aa)) is regulatory domain.

Belongs to the alpha-IPM synthase/homocitrate synthase family. LeuA type 1 subfamily. As to quaternary structure, homodimer. It depends on Mn(2+) as a cofactor.

Its subcellular location is the cytoplasm. It carries out the reaction 3-methyl-2-oxobutanoate + acetyl-CoA + H2O = (2S)-2-isopropylmalate + CoA + H(+). Its pathway is amino-acid biosynthesis; L-leucine biosynthesis; L-leucine from 3-methyl-2-oxobutanoate: step 1/4. Catalyzes the condensation of the acetyl group of acetyl-CoA with 3-methyl-2-oxobutanoate (2-ketoisovalerate) to form 3-carboxy-3-hydroxy-4-methylpentanoate (2-isopropylmalate). The chain is 2-isopropylmalate synthase from Stenotrophomonas maltophilia (strain K279a).